The chain runs to 592 residues: MYIQTQFASLLLLAGTSLASQVRKYNFTITSQWSSGDGHGRPVFMINGQSPGPLIEADEGDEIEVFVDNQLAAETTMHWHGIYQIDRPWNDGVPGVTQYSMQPRDTYTYRFTVQQQYGSYFYHGHFGPAFADGMRGPMWIAPAAWRPRPYELISDSSHDVEQMKKAEKHPFHVVISDWNAEPMDILLVMYRDTGIVPWCSNSIVLNGKGRTYCHSAELIESVGGPGRNTLGCLMQPDQELYSNEQVCEATQTDLEIFQAEEGHEWIWINFIHSGAHHELQISVDEHEIVVVAADGEFTYPQRVHAANCNLGERISILVHLNQKPGDYAIRVTSLRQEQVIQGLGILRYPGSSHGAQEAEPPATKPWVHLNGTLISDKLQQMDEMKLAPFPSRPPPPQSDHTLKFFVNMTGTGSWALNIGPHQAFRQQLPPLLWEEDSRGVTTYESDVQGGSMQNGSVVDIIFTNGANVNSQHPFHKHNNKAWVIGTGTGGFPWDTVDEAIQQGGMADSFNFVDPPIRDGCRLGNTTGDWTVIRYDIAFPAASMLHCHMIHHFGAGQQVVLLEGVESMAKIPAEMKDRVHSNFRPPLRYGPLD.

The signal sequence occupies residues 1–19; sequence MYIQTQFASLLLLAGTSLA. N26 carries an N-linked (GlcNAc...) asparagine glycan. 2 Plastocyanin-like domains span residues 32-142 and 173-350; these read QWSS…WIAP and VVIS…RYPG. The Cu cation site is built by H78, H80, H123, and H125. N-linked (GlcNAc...) asparagine glycosylation is found at N370, N407, and N454. The Plastocyanin-like 3 domain occupies 445-563; that stretch reads SDVQGGSMQN…AGQQVVLLEG (119 aa). H475 contributes to the Cu cation binding site. N-linked (GlcNAc...) asparagine glycosylation occurs at N524.

The protein belongs to the multicopper oxidase family.

Its subcellular location is the cell surface. Its pathway is pigment biosynthesis; melanin biosynthesis. In terms of biological role, laccase involved the biosynthesis of dihydroxynaphthalene (DHN)-melanin, a bluish-green pigment forming a dark layer in the conidial wall that protects the conidia from UV radiations. The first step of the pathway is the production of the pentaketide 1,3,6,8-tetrahydroxynaphthalene (1,3,6,8-THN or T4HN) by the polyketide synthase PfmaE though condensation of acetyl-CoA with malonyl-CoA. T4HN is not stable and easily oxidizes into the stable form flaviolin. T4HN is also substrate of the hydroxynaphthalene reductase PfmaG to yield scytalone. The scytalone dehydratase PfmaJ then reduces scytalone to 1,3,8-THN. 1,3,8-THN is then substrate of the hydroxynaphthalene reductase PfmaI to yield vermelone. Vermelone is further converted by the multicopper oxidase PfmaD to 1,8-DHN. Finally the laccase PFICI_06862 transforms 1,8-DHN to DHN-melanin. The roles of the 5-oxoprolinase PfmaA and the proline iminopeptidase PfmaB within the cluster have not been elucidated yet. The protein is Laccase PFICI_06862 of Pestalotiopsis fici (strain W106-1 / CGMCC3.15140).